Here is a 479-residue protein sequence, read N- to C-terminus: Transcription factor CP2-like protein 1 (479 aa).

Residues methionine 1–cysteine 52 are mediate transcriptional repression. The region spanning arginine 43–asparagine 280 is the Grh/CP2 DB domain. Disordered stretches follow at residues lysine 219–serine 248 and tryptophan 260–glycine 301. Residues lysine 221–tyrosine 245 are compositionally biased toward basic and acidic residues. The interval proline 261–arginine 365 is SAM2-like domain. Residues glutamine 266–asparagine 292 show a composition bias toward polar residues.

The protein belongs to the grh/CP2 family. CP2 subfamily. Forms homohexamers via its SAM-like domain. Interacts with Mta1; which is indispensable for Tfcp2l1-mediated self-renewal-promoting effect and endoderm-inhibiting action. As to expression, highly expressed in placenta, testis, small intestine, kidney and stomach. Low levels of expression in lung, mesenteric lymph nodes, muscle, ovary, and thymus. No expression was detected in brain, heart, liver, and spleen. Expressed in eccrine glands in the palm. Expression is prominent in both kidney collecting ducts intercalated (IC) and principal (PC) cells. Also expressed in the thick limb of Henle and connecting segments of the nephron.

It localises to the nucleus. Its function is as follows. Transcription factor that facilitates establishment and maintenance of pluripotency in embryonic stem cells (ESCs). With Klf2, acts as the major effector of self-renewal that mediates induction of pluripotency downstream of LIF/Stat3 and Wnt/beta-catenin signaling. Required for normal duct development in the salivary gland and kidney. Coordinates the development of the kidney collecting ducts intercalated (IC) and principal (PC) cells, which regulate acid-base and salt-water homeostasis, respectively. Regulates the expression of IC genes including subunits B1 and D2 of the V-ATPase complex, Oxgr1, Ca12, Slc4a1, Aqp6 and IC-specific transcription factor Foxi1. Also regulates the expression of Jag1 and subsequent notch signaling in the collecting duct. Jag1 initiates notch signaling in PCs but inhibits notch signaling in ICs. Acts as a transcriptional suppressor that may suppress UBP1-mediated transcriptional activation. Modulates the placental expression of CYP11A1. The protein is Transcription factor CP2-like protein 1 (Tfcp2l1) of Mus musculus (Mouse).